A 209-amino-acid chain; its full sequence is ATP-dependent dethiobiotin synthetase BioD (209 aa).

Position 13–18 (aspartate 13–valine 18) interacts with ATP. A Mg(2+)-binding site is contributed by threonine 17. Lysine 33 is an active-site residue. Position 100 (glutamate 100) interacts with Mg(2+). Residues glutamate 100–glycine 103 and proline 184–leucine 186 each bind ATP.

The protein belongs to the dethiobiotin synthetase family. In terms of assembly, homodimer. Mg(2+) serves as cofactor.

It localises to the cytoplasm. The enzyme catalyses (7R,8S)-7,8-diammoniononanoate + CO2 + ATP = (4R,5S)-dethiobiotin + ADP + phosphate + 3 H(+). It participates in cofactor biosynthesis; biotin biosynthesis; biotin from 7,8-diaminononanoate: step 1/2. In terms of biological role, catalyzes a mechanistically unusual reaction, the ATP-dependent insertion of CO2 between the N7 and N8 nitrogen atoms of 7,8-diaminopelargonic acid (DAPA, also called 7,8-diammoniononanoate) to form a ureido ring. This chain is ATP-dependent dethiobiotin synthetase BioD, found in Rhizorhabdus wittichii (strain DSM 6014 / CCUG 31198 / JCM 15750 / NBRC 105917 / EY 4224 / RW1) (Sphingomonas wittichii).